Consider the following 499-residue polypeptide: Probable lipid II flippase MurJ (499 aa).

Transmembrane regions (helical) follow at residues 4 to 24 (LFRA…FGYV), 26 to 46 (DATV…FIAF), 88 to 108 (LLIT…EEII), 130 to 150 (FTIL…ILLV), 154 to 174 (FFVP…SLVI), 184 to 204 (LALA…FLLF), 227 to 247 (FLFT…DTFL), 265 to 285 (IYLL…LALV), 297 to 317 (TALK…FFLS), 335 to 355 (LFYT…YSLQ), 375 to 395 (AFLS…LLNF), 396 to 416 (GVYS…VYLY), 425 to 445 (IPFG…GLVY), and 455 to 475 (FILV…LIIL).

This sequence belongs to the MurJ/MviN family.

The protein resides in the cell inner membrane. The protein operates within cell wall biogenesis; peptidoglycan biosynthesis. Its function is as follows. Involved in peptidoglycan biosynthesis. Transports lipid-linked peptidoglycan precursors from the inner to the outer leaflet of the cytoplasmic membrane. The sequence is that of Probable lipid II flippase MurJ from Aquifex aeolicus (strain VF5).